The chain runs to 181 residues: Translation initiation factor IF-3 (181 aa).

Belongs to the IF-3 family. In terms of assembly, monomer.

It localises to the cytoplasm. Its function is as follows. IF-3 binds to the 30S ribosomal subunit and shifts the equilibrium between 70S ribosomes and their 50S and 30S subunits in favor of the free subunits, thus enhancing the availability of 30S subunits on which protein synthesis initiation begins. The polypeptide is Translation initiation factor IF-3 (Idiomarina loihiensis (strain ATCC BAA-735 / DSM 15497 / L2-TR)).